A 120-amino-acid polypeptide reads, in one-letter code: NADH dehydrogenase [ubiquinone] 1 subunit C2 (120 aa).

M1 bears the N-acetylmethionine mark. A helical transmembrane segment spans residues 57 to 76 (GLHRQLLYITSFVFVGYYLL).

It belongs to the complex I NDUFC2 subunit family. As to quaternary structure, complex I is composed of 45 different subunits. Interacts with TMEM242. In terms of processing, there is a minor unacetylated form of subunit B14.5b.

It localises to the mitochondrion inner membrane. Functionally, accessory subunit of the mitochondrial membrane respiratory chain NADH dehydrogenase (Complex I), that is believed not to be involved in catalysis but required for the complex assembly. Complex I functions in the transfer of electrons from NADH to the respiratory chain. The immediate electron acceptor for the enzyme is believed to be ubiquinone. The sequence is that of NADH dehydrogenase [ubiquinone] 1 subunit C2 from Bos taurus (Bovine).